We begin with the raw amino-acid sequence, 91 residues long: UPF0250 protein PP_4802 (91 aa).

It belongs to the UPF0250 family.

This is UPF0250 protein PP_4802 from Pseudomonas putida (strain ATCC 47054 / DSM 6125 / CFBP 8728 / NCIMB 11950 / KT2440).